Consider the following 124-residue polypeptide: Small ribosomal subunit protein uS12 (124 aa).

Asp-89 carries the 3-methylthioaspartic acid modification. A disordered region spans residues 103-124; that stretch reads DTAGVKDRRQSRSKYGAKSPKE.

This sequence belongs to the universal ribosomal protein uS12 family. As to quaternary structure, part of the 30S ribosomal subunit. Contacts proteins S8 and S17. May interact with IF1 in the 30S initiation complex.

In terms of biological role, with S4 and S5 plays an important role in translational accuracy. Its function is as follows. Interacts with and stabilizes bases of the 16S rRNA that are involved in tRNA selection in the A site and with the mRNA backbone. Located at the interface of the 30S and 50S subunits, it traverses the body of the 30S subunit contacting proteins on the other side and probably holding the rRNA structure together. The combined cluster of proteins S8, S12 and S17 appears to hold together the shoulder and platform of the 30S subunit. The chain is Small ribosomal subunit protein uS12 from Prochlorococcus marinus (strain NATL1A).